The chain runs to 447 residues: Asparagine--tRNA ligase (447 aa).

This sequence belongs to the class-II aminoacyl-tRNA synthetase family. Homodimer.

The protein resides in the cytoplasm. The catalysed reaction is tRNA(Asn) + L-asparagine + ATP = L-asparaginyl-tRNA(Asn) + AMP + diphosphate + H(+). In Mycoplasma mobile (strain ATCC 43663 / 163K / NCTC 11711) (Mesomycoplasma mobile), this protein is Asparagine--tRNA ligase.